Consider the following 345-residue polypeptide: Methylthioribose-1-phosphate isomerase (345 aa).

Residues 44-46, Arg-86, and Gln-194 contribute to the substrate site; that span reads RGA. Asp-235 acts as the Proton donor in catalysis. 245–246 lines the substrate pocket; the sequence is NK.

This sequence belongs to the eIF-2B alpha/beta/delta subunits family. MtnA subfamily.

The enzyme catalyses 5-(methylsulfanyl)-alpha-D-ribose 1-phosphate = 5-(methylsulfanyl)-D-ribulose 1-phosphate. It functions in the pathway amino-acid biosynthesis; L-methionine biosynthesis via salvage pathway; L-methionine from S-methyl-5-thio-alpha-D-ribose 1-phosphate: step 1/6. Its function is as follows. Catalyzes the interconversion of methylthioribose-1-phosphate (MTR-1-P) into methylthioribulose-1-phosphate (MTRu-1-P). This Desulfitobacterium hafniense (strain Y51) protein is Methylthioribose-1-phosphate isomerase.